A 404-amino-acid polypeptide reads, in one-letter code: Exodeoxyribonuclease 7 large subunit (404 aa).

The protein belongs to the XseA family. Heterooligomer composed of large and small subunits.

It is found in the cytoplasm. It catalyses the reaction Exonucleolytic cleavage in either 5'- to 3'- or 3'- to 5'-direction to yield nucleoside 5'-phosphates.. Bidirectionally degrades single-stranded DNA into large acid-insoluble oligonucleotides, which are then degraded further into small acid-soluble oligonucleotides. In Ruminiclostridium cellulolyticum (strain ATCC 35319 / DSM 5812 / JCM 6584 / H10) (Clostridium cellulolyticum), this protein is Exodeoxyribonuclease 7 large subunit.